A 98-amino-acid chain; its full sequence is Integration host factor subunit alpha (98 aa).

The span at 53–69 shows a compositional bias: basic and acidic residues; that stretch reads DLREKNERPGRNPKTGE. The disordered stretch occupies residues 53–72; the sequence is DLREKNERPGRNPKTGEDIP.

The protein belongs to the bacterial histone-like protein family. In terms of assembly, heterodimer of an alpha and a beta chain.

Its function is as follows. This protein is one of the two subunits of integration host factor, a specific DNA-binding protein that functions in genetic recombination as well as in transcriptional and translational control. The protein is Integration host factor subunit alpha of Vibrio atlanticus (strain LGP32) (Vibrio splendidus (strain Mel32)).